Here is a 269-residue protein sequence, read N- to C-terminus: MAVVSLEDLLNAGVHFGHQTRRWNPKMSQYIYTARNGVHIIDLVQTAQLMEDAYQYVRNNADKGKRFLFVGTKRQAAGIIAQEASRCGANYVNQRWLGGMLTNWETIKTRVERLKELEAMEESGQIARRPKKEASVLRRELGKLQKYLGGIKTMRRPPDVVVIVDQRREYNAIQECQKLGIPMISLLDTNCDPDYADIPIPANDDAIRSIKLILGKLADAIYEGRHGQLDSDDDYEEFDESLAEGDYDDYDEEEDEDSETVSSQEGEEE.

Residues 228-269 (QLDSDDDYEEFDESLAEGDYDDYDEEEDEDSETVSSQEGEEE) form a disordered region. Acidic residues predominate over residues 230-269 (DSDDDYEEFDESLAEGDYDDYDEEEDEDSETVSSQEGEEE).

The protein belongs to the universal ribosomal protein uS2 family.

The chain is Small ribosomal subunit protein uS2 from Crocosphaera subtropica (strain ATCC 51142 / BH68) (Cyanothece sp. (strain ATCC 51142)).